The sequence spans 292 residues: Aspartate carbamoyltransferase catalytic subunit (292 aa).

Carbamoyl phosphate is bound by residues Arg50 and Thr51. L-aspartate is bound at residue Lys78. The carbamoyl phosphate site is built by Arg100, His128, and Gln131. Residues Arg161 and Arg211 each contribute to the L-aspartate site. 2 residues coordinate carbamoyl phosphate: Gly250 and Pro251.

This sequence belongs to the aspartate/ornithine carbamoyltransferase superfamily. ATCase family. In terms of assembly, heterododecamer (2C3:3R2) of six catalytic PyrB chains organized as two trimers (C3), and six regulatory PyrI chains organized as three dimers (R2).

It catalyses the reaction carbamoyl phosphate + L-aspartate = N-carbamoyl-L-aspartate + phosphate + H(+). Its pathway is pyrimidine metabolism; UMP biosynthesis via de novo pathway; (S)-dihydroorotate from bicarbonate: step 2/3. Functionally, catalyzes the condensation of carbamoyl phosphate and aspartate to form carbamoyl aspartate and inorganic phosphate, the committed step in the de novo pyrimidine nucleotide biosynthesis pathway. The sequence is that of Aspartate carbamoyltransferase catalytic subunit from Nitratiruptor sp. (strain SB155-2).